The sequence spans 704 residues: Capsule polysaccharide modification protein LipA (704 aa).

The protein localises to the cell inner membrane. Involved in the phospholipid modification of the capsular polysaccharide, a strong requirement for its translocation to the cell surface. The sequence is that of Capsule polysaccharide modification protein LipA (lipA) from Neisseria meningitidis serogroup B (strain ATCC BAA-335 / MC58).